A 333-amino-acid chain; its full sequence is Probable tRNA pseudouridine synthase B (333 aa).

The Nucleophile role is filled by aspartate 71. Residues 238 to 313 enclose the PUA domain; sequence LPKIWVRDSA…LVARTDRVVM (76 aa).

Belongs to the pseudouridine synthase TruB family. Type 2 subfamily.

It carries out the reaction uridine(55) in tRNA = pseudouridine(55) in tRNA. In terms of biological role, could be responsible for synthesis of pseudouridine from uracil-55 in the psi GC loop of transfer RNAs. This chain is Probable tRNA pseudouridine synthase B, found in Pyrobaculum calidifontis (strain DSM 21063 / JCM 11548 / VA1).